The chain runs to 176 residues: ATP-dependent protease subunit HslV (176 aa).

The active site involves threonine 2. Na(+) is bound by residues glycine 157, cysteine 160, and threonine 163.

Belongs to the peptidase T1B family. HslV subfamily. A double ring-shaped homohexamer of HslV is capped on each side by a ring-shaped HslU homohexamer. The assembly of the HslU/HslV complex is dependent on binding of ATP.

Its subcellular location is the cytoplasm. It carries out the reaction ATP-dependent cleavage of peptide bonds with broad specificity.. Allosterically activated by HslU binding. In terms of biological role, protease subunit of a proteasome-like degradation complex believed to be a general protein degrading machinery. The polypeptide is ATP-dependent protease subunit HslV (Pseudomonas syringae pv. tomato (strain ATCC BAA-871 / DC3000)).